Here is a 148-residue protein sequence, read N- to C-terminus: MFDVTLLILLGLAALGFISHNTTVAVSILVLIIVRVTPLSTFFPWIEKQGLSIGIIILTIGVMAPIASGTLPPSTLIHSFLNWKSLVAIAVGVIVSWLGGRGVTLMGSQPQLVAGLLVGTVLGVALFRGVPVGPLIATGLVSLIVGKQ.

4 helical membrane passes run 14–34 (ALGF…LIIV), 51–71 (LSIG…SGTL), 86–106 (LVAI…VTLM), and 112–132 (LVAG…GVPV).

This sequence belongs to the UPF0756 family.

The protein localises to the cell membrane. This Escherichia coli O157:H7 protein is UPF0756 membrane protein YeaL.